A 454-amino-acid polypeptide reads, in one-letter code: UDP-N-acetylmuramoylalanine--D-glutamate ligase (454 aa).

116–122 serves as a coordination point for ATP; that stretch reads GTNGKTS.

The protein belongs to the MurCDEF family.

It localises to the cytoplasm. The enzyme catalyses UDP-N-acetyl-alpha-D-muramoyl-L-alanine + D-glutamate + ATP = UDP-N-acetyl-alpha-D-muramoyl-L-alanyl-D-glutamate + ADP + phosphate + H(+). The protein operates within cell wall biogenesis; peptidoglycan biosynthesis. Cell wall formation. Catalyzes the addition of glutamate to the nucleotide precursor UDP-N-acetylmuramoyl-L-alanine (UMA). This is UDP-N-acetylmuramoylalanine--D-glutamate ligase from Lachnoclostridium phytofermentans (strain ATCC 700394 / DSM 18823 / ISDg) (Clostridium phytofermentans).